The primary structure comprises 137 residues: MLQPKRTKFRKQHKGRIHGEAKGGFNLNFGSYALKAIEPERVTARQIEAARRAITRHMKRQGRVWIRIFPDVPVSSKPTEVRMGKGKGSVDYWAARVHPGRIMFEIDGVNDTIAREALRLGAQKLPVLTRIVAREDW.

The protein belongs to the universal ribosomal protein uL16 family. Part of the 50S ribosomal subunit.

Its function is as follows. Binds 23S rRNA and is also seen to make contacts with the A and possibly P site tRNAs. The protein is Large ribosomal subunit protein uL16 of Paracoccus denitrificans (strain Pd 1222).